We begin with the raw amino-acid sequence, 353 residues long: Carbamoyl phosphate synthase small chain (353 aa).

The tract at residues 1–166 is CPSase; that stretch reads MSDAYLALET…AETHGNGDTT (166 aa). The L-glutamine site is built by Ser-45, Gly-214, and Gly-216. A Glutamine amidotransferase type-1 domain is found at 166–349; that stretch reads TVALVDCGAK…LAMADASYTP (184 aa). The active-site Nucleophile is Cys-241. L-glutamine-binding residues include Leu-242, Gln-245, Asn-283, Gly-285, and Tyr-286. Active-site residues include His-322 and Glu-324.

It belongs to the CarA family. As to quaternary structure, composed of two chains; the small (or glutamine) chain promotes the hydrolysis of glutamine to ammonia, which is used by the large (or ammonia) chain to synthesize carbamoyl phosphate. Tetramer of heterodimers (alpha,beta)4.

The enzyme catalyses hydrogencarbonate + L-glutamine + 2 ATP + H2O = carbamoyl phosphate + L-glutamate + 2 ADP + phosphate + 2 H(+). The catalysed reaction is L-glutamine + H2O = L-glutamate + NH4(+). It functions in the pathway amino-acid biosynthesis; L-arginine biosynthesis; carbamoyl phosphate from bicarbonate: step 1/1. It participates in pyrimidine metabolism; UMP biosynthesis via de novo pathway; (S)-dihydroorotate from bicarbonate: step 1/3. Small subunit of the glutamine-dependent carbamoyl phosphate synthetase (CPSase). CPSase catalyzes the formation of carbamoyl phosphate from the ammonia moiety of glutamine, carbonate, and phosphate donated by ATP, constituting the first step of 2 biosynthetic pathways, one leading to arginine and/or urea and the other to pyrimidine nucleotides. The small subunit (glutamine amidotransferase) binds and cleaves glutamine to supply the large subunit with the substrate ammonia. This is Carbamoyl phosphate synthase small chain from Halobacterium salinarum (strain ATCC 29341 / DSM 671 / R1).